The sequence spans 324 residues: Quinolinate synthase 2 (324 aa).

Residues histidine 48 and serine 66 each contribute to the iminosuccinate site. Residue cysteine 111 coordinates [4Fe-4S] cluster. Residues 137–139 (YVN) and serine 154 contribute to the iminosuccinate site. Cysteine 196 serves as a coordination point for [4Fe-4S] cluster. Iminosuccinate is bound by residues 222-224 (HPE) and threonine 239. A [4Fe-4S] cluster-binding site is contributed by cysteine 282.

Belongs to the quinolinate synthase family. Type 2 subfamily. It depends on [4Fe-4S] cluster as a cofactor.

It is found in the cytoplasm. It catalyses the reaction iminosuccinate + dihydroxyacetone phosphate = quinolinate + phosphate + 2 H2O + H(+). The protein operates within cofactor biosynthesis; NAD(+) biosynthesis; quinolinate from iminoaspartate: step 1/1. Its function is as follows. Catalyzes the condensation of iminoaspartate with dihydroxyacetone phosphate to form quinolinate. This Mesorhizobium japonicum (strain LMG 29417 / CECT 9101 / MAFF 303099) (Mesorhizobium loti (strain MAFF 303099)) protein is Quinolinate synthase 2.